A 101-amino-acid chain; its full sequence is Trp operon repressor homolog (101 aa).

A DNA-binding region spans residues 59–82 (QREIQQNLSTSAATITRGSNMLKM).

Belongs to the TrpR family. In terms of assembly, homodimer.

The protein resides in the cytoplasm. This protein is an aporepressor. When complexed with L-tryptophan it binds the operator region of the trp operon and prevents the initiation of transcription. This is Trp operon repressor homolog from Actinobacillus succinogenes (strain ATCC 55618 / DSM 22257 / CCUG 43843 / 130Z).